Consider the following 159-residue polypeptide: Abscisic acid and environmental stress-inducible protein (159 aa).

6 tandem repeats follow at residues 38–49, 50–61, 63–74, 77–88, 91–102, and 105–116. The segment at 38-135 is 7 X 12 AA repeats of G-G-G-Y-N-H-G-G-G-Y-N; the sequence is GGGYNHGGGG…GYNHGGGGCQ (98 aa). The stretch at 124 to 135 is one 7; approximate repeat; it reads GGGYNHGGGGCQ.

Belongs to the GRP family.

This is Abscisic acid and environmental stress-inducible protein from Medicago sativa subsp. falcata (Sickle medic).